We begin with the raw amino-acid sequence, 75 residues long: Ribonuclease pancreatic (75 aa).

Cystine bridges form between Cys-7–Cys-65 and Cys-46–Cys-53. Residue Asn-15 is glycosylated (N-linked (GlcNAc...) asparagine). Residues 22–26 (KPVNT), Lys-47, and Arg-66 each bind substrate.

This sequence belongs to the pancreatic ribonuclease family. As to quaternary structure, monomer. Interacts with and forms tight 1:1 complexes with RNH1. Dimerization of two such complexes may occur. Interaction with RNH1 inhibits this protein. As to expression, pancreas.

Its subcellular location is the secreted. The catalysed reaction is an [RNA] containing cytidine + H2O = an [RNA]-3'-cytidine-3'-phosphate + a 5'-hydroxy-ribonucleotide-3'-[RNA].. The enzyme catalyses an [RNA] containing uridine + H2O = an [RNA]-3'-uridine-3'-phosphate + a 5'-hydroxy-ribonucleotide-3'-[RNA].. Its function is as follows. Endonuclease that catalyzes the cleavage of RNA on the 3' side of pyrimidine nucleotides. Acts on single-stranded and double-stranded RNA. In Oryx leucoryx (Arabian oryx), this protein is Ribonuclease pancreatic (rnase1).